The primary structure comprises 343 residues: Heat-inducible transcription repressor HrcA (343 aa).

It belongs to the HrcA family.

Functionally, negative regulator of class I heat shock genes (grpE-dnaK-dnaJ and groELS operons). Prevents heat-shock induction of these operons. The protein is Heat-inducible transcription repressor HrcA of Mycobacterium ulcerans (strain Agy99).